The primary structure comprises 609 residues: MTIDNPSAFLKTLPTGSGVYQMQDAQGKVIYVGKARNLQKRVSSYFRRQLDSKTQAMMAQVQSIQTTITRNENEALLLEASFIKQFRPRYNVLLRDDKSYPYLYLATHQKFPRLDFYRGAKKAPGRYFGPYPNAGSVRENLALIQKLFKLRQCSESFFKNRTRPCLQYQIKRCTAPCVGYVNEQEYRRQVEDAILFFEGKNDQVIIKLTERMEVTSENLVFEEAAHYRDQIRQLRRLQKQQIITGGKGNIDIIGIAESNGAIGFAILFIRSGRMIGHKPFFPNTPLGTTLQTALVEFIPQYYLSPLRNGDIPERIVTSEPLEDRLWIQRALSSGLNRKLAITDQKRAPYKQWQAMAALNAAQALSQHLAQKNTFALKLEAIQKSLALPNPIARIECFDISHTLGEATVASCVVFGEEGPIKKDYRRFNISGVTPGDDYGALRQALTRRYVRLKEGEGILPDVLLIDGGMGQLRQAAEVLEELQVSGVILTAIAKGPGRKAGLEKLFVWGRREEIHLPADNIAFHLIQQIRDEAHRFAITAHCNRRAKRRVESTLQEIEGIGPKRRQKLLKYFGGLQELQRASIEEIARVPGVSETLAKAIYDACHQHKG.

In terms of domain architecture, GIY-YIG spans 15-92; it reads TGSGVYQMQD…IKQFRPRYNV (78 aa). The region spanning 202–237 is the UVR domain; that stretch reads DQVIIKLTERMEVTSENLVFEEAAHYRDQIRQLRRL.

It belongs to the UvrC family. As to quaternary structure, interacts with UvrB in an incision complex.

The protein localises to the cytoplasm. Its function is as follows. The UvrABC repair system catalyzes the recognition and processing of DNA lesions. UvrC both incises the 5' and 3' sides of the lesion. The N-terminal half is responsible for the 3' incision and the C-terminal half is responsible for the 5' incision. The polypeptide is UvrABC system protein C (Coxiella burnetii (strain RSA 493 / Nine Mile phase I)).